Reading from the N-terminus, the 305-residue chain is Putative monooxygenase p33MONOX (305 aa).

Disordered stretches follow at residues 1-20 and 37-56; these read MASRQPEVPALEASGPLGKM and LEDPAPMTPPPSDMGSVPWK. T44 is subject to Phosphothreonine. A Flavin-containing monooxygenase motif motif is present at residues 67–77; that stretch reads LAKVEEGEASL. Residues 159–305 are disordered; sequence SGEITKEERQ…DLNVLTPTGF (147 aa). Residues 169 to 183 are compositionally biased toward low complexity; it reads PASAQSTPSTTPHSS. Phosphothreonine is present on T175. Residues S182 and S183 each carry the phosphoserine modification. Polar residues-rich tracts occupy residues 191–210 and 233–243; these read WFTSGSSTALPGPNPSTMDS and KYDSGSSTTQA.

Belongs to the P33MONOX family. As to quaternary structure, interacts with NELFB, NOL12 and PRNP.

The protein localises to the cytoplasm. In terms of biological role, potential NADPH-dependent oxidoreductase. May be involved in the regulation of neuronal survival, differentiation and axonal outgrowth. The protein is Putative monooxygenase p33MONOX (P33MONOX) of Pongo abelii (Sumatran orangutan).